Reading from the N-terminus, the 762-residue chain is Catalase-peroxidase (762 aa).

Residues 1 to 22 (MAEAKCPFSQSRSNANVAGGGT) are disordered. Residues 96–242 (WHSAGTYRVF…LAASHMGLIY (147 aa)) constitute a cross-link (tryptophyl-tyrosyl-methioninium (Trp-Tyr) (with M-268)). H97 (proton acceptor) is an active-site residue. Residues 242-268 (YVNPEGPDGNPDPVAAARDIRTTFGRM) constitute a cross-link (tryptophyl-tyrosyl-methioninium (Tyr-Met) (with W-96)). Residue H283 coordinates heme b.

This sequence belongs to the peroxidase family. Peroxidase/catalase subfamily. Homodimer or homotetramer. It depends on heme b as a cofactor. Formation of the three residue Trp-Tyr-Met cross-link is important for the catalase, but not the peroxidase activity of the enzyme.

The protein resides in the cytoplasm. It catalyses the reaction H2O2 + AH2 = A + 2 H2O. The catalysed reaction is 2 H2O2 = O2 + 2 H2O. Functionally, bifunctional enzyme with both catalase and broad-spectrum peroxidase activity. The protein is Catalase-peroxidase of Aspergillus niger (strain ATCC MYA-4892 / CBS 513.88 / FGSC A1513).